The primary structure comprises 248 residues: PF03932 family protein CutC (248 aa).

Belongs to the CutC family. In terms of assembly, homodimer.

The protein resides in the cytoplasm. This Salmonella typhimurium (strain LT2 / SGSC1412 / ATCC 700720) protein is PF03932 family protein CutC.